The following is a 165-amino-acid chain: Xanthine-guanine phosphoribosyltransferase (165 aa).

5-phospho-alpha-D-ribose 1-diphosphate contacts are provided by residues 41 to 42 (RG) and 98 to 106 (DDLTDTGKT). Aspartate 99 provides a ligand contact to Mg(2+). Guanine-binding residues include aspartate 102 and isoleucine 145. Aspartate 102 and isoleucine 145 together coordinate xanthine. Residues 102-106 (DTGKT) and 144-145 (WI) contribute to the GMP site.

It belongs to the purine/pyrimidine phosphoribosyltransferase family. XGPT subfamily. Homotetramer. Requires Mg(2+) as cofactor.

The protein localises to the cell inner membrane. It catalyses the reaction GMP + diphosphate = guanine + 5-phospho-alpha-D-ribose 1-diphosphate. The catalysed reaction is XMP + diphosphate = xanthine + 5-phospho-alpha-D-ribose 1-diphosphate. It carries out the reaction IMP + diphosphate = hypoxanthine + 5-phospho-alpha-D-ribose 1-diphosphate. Its pathway is purine metabolism; GMP biosynthesis via salvage pathway; GMP from guanine: step 1/1. The protein operates within purine metabolism; XMP biosynthesis via salvage pathway; XMP from xanthine: step 1/1. Purine salvage pathway enzyme that catalyzes the transfer of the ribosyl-5-phosphate group from 5-phospho-alpha-D-ribose 1-diphosphate (PRPP) to the N9 position of the 6-oxopurines guanine and xanthine to form the corresponding ribonucleotides GMP (guanosine 5'-monophosphate) and XMP (xanthosine 5'-monophosphate), with the release of PPi. To a lesser extent, also acts on hypoxanthine. In Chelativorans sp. (strain BNC1), this protein is Xanthine-guanine phosphoribosyltransferase.